A 451-amino-acid chain; its full sequence is Tubby-like F-box protein 12 (451 aa).

The 56-residue stretch at 57-112 (SRWVGLPPELLRDVMKRLEEGESNWPSRKDVVACAAVCRTWREICKDIVQSPEICG) folds into the F-box domain. The span at 387–406 (LEQQQQQQQQNHASSSSSAS) shows a compositional bias: low complexity. The tract at residues 387–407 (LEQQQQQQQQNHASSSSSASD) is disordered.

The protein belongs to the TUB family. In terms of tissue distribution, ubiquitous.

The chain is Tubby-like F-box protein 12 (TULP12) from Oryza sativa subsp. japonica (Rice).